The sequence spans 218 residues: 1-Cys peroxiredoxin (218 aa).

One can recognise a Thioredoxin domain in the interval 4-164; sequence LTIGDTIPDL…VLRVVESLQK (161 aa). Cys-46 serves as the catalytic Cysteine sulfenic acid (-SOH) intermediate. A Bipartite nuclear localization signal motif is present at residues 194–217; it reads KEMFPQGFKTADLPSKKEYLRFTN.

The protein belongs to the peroxiredoxin family. Prx6 subfamily.

It is found in the nucleus. The protein localises to the cytoplasm. The enzyme catalyses a hydroperoxide + [thioredoxin]-dithiol = an alcohol + [thioredoxin]-disulfide + H2O. Its function is as follows. Thiol-specific peroxidase that catalyzes the reduction of hydrogen peroxide and organic hydroperoxides to water and alcohols, respectively. Seems to contribute to the inhibition of germination during stress. This is 1-Cys peroxiredoxin from Medicago truncatula (Barrel medic).